The chain runs to 611 residues: Poly(3-hydroxyalkanoate) polymerase subunit PhaC (611 aa).

C349 is a catalytic residue.

This sequence belongs to the PHA/PHB synthase family. Type I PhaC subfamily. Monomer.

Its subcellular location is the cytoplasm. The enzyme catalyses (3R)-3-hydroxybutanoyl-CoA + [(3R)-hydroxybutanoate](n) = [(3R)-hydroxybutanoate](n+1) + CoA. It participates in biopolymer metabolism; poly-(R)-3-hydroxybutanoate biosynthesis. Functionally, polymerizes D(-)-3-hydroxybutyryl-CoA to create PHB which consists of thousands of hydroxybutyrate molecules linked end to end. PHB serves as an intracellular energy reserve material when cells grow under conditions of nutrient limitation. The sequence is that of Poly(3-hydroxyalkanoate) polymerase subunit PhaC from Rhizobium meliloti (strain 1021) (Ensifer meliloti).